Here is a 142-residue protein sequence, read N- to C-terminus: Small ribosomal subunit protein uS12 (142 aa).

It belongs to the universal ribosomal protein uS12 family.

This is Small ribosomal subunit protein uS12 from Tetrahymena thermophila.